The sequence spans 511 residues: GMP synthase [glutamine-hydrolyzing] (511 aa).

The Glutamine amidotransferase type-1 domain maps to 5–195 (DILVLDFGSQ…AKYACNCDSV (191 aa)). Cys-82 (nucleophile) is an active-site residue. Residues His-169 and Glu-171 contribute to the active site. The GMPS ATP-PPase domain occupies 196-386 (WNMGSFAKTQ…LGLSKDVVYR (191 aa)). 223-229 (SGGVDSS) contacts ATP.

Homodimer.

It catalyses the reaction XMP + L-glutamine + ATP + H2O = GMP + L-glutamate + AMP + diphosphate + 2 H(+). The protein operates within purine metabolism; GMP biosynthesis; GMP from XMP (L-Gln route): step 1/1. Functionally, catalyzes the synthesis of GMP from XMP. The protein is GMP synthase [glutamine-hydrolyzing] of Campylobacter lari (strain RM2100 / D67 / ATCC BAA-1060).